The following is a 442-amino-acid chain: tRNA modification GTPase MnmE (442 aa).

The (6S)-5-formyl-5,6,7,8-tetrahydrofolate site is built by arginine 27, glutamate 84, and lysine 124. The TrmE-type G domain maps to 221–366 (GFQIVILGAP…LMELISQASA (146 aa)). Residues 231 to 236 (NAGKSS), 250 to 256 (TEEPGTT), 275 to 278 (DTAG), and 329 to 332 (NKAD) each bind GTP. Residues serine 235 and threonine 256 each coordinate Mg(2+). Lysine 442 contributes to the (6S)-5-formyl-5,6,7,8-tetrahydrofolate binding site.

It belongs to the TRAFAC class TrmE-Era-EngA-EngB-Septin-like GTPase superfamily. TrmE GTPase family. As to quaternary structure, homodimer. Heterotetramer of two MnmE and two MnmG subunits. The cofactor is K(+).

The protein resides in the cytoplasm. Its function is as follows. Exhibits a very high intrinsic GTPase hydrolysis rate. Involved in the addition of a carboxymethylaminomethyl (cmnm) group at the wobble position (U34) of certain tRNAs, forming tRNA-cmnm(5)s(2)U34. This Chelativorans sp. (strain BNC1) protein is tRNA modification GTPase MnmE.